A 167-amino-acid polypeptide reads, in one-letter code: NADH-quinone oxidoreductase subunit B 2 (167 aa).

Residues cysteine 38, cysteine 39, cysteine 104, and cysteine 133 each coordinate [4Fe-4S] cluster.

The protein belongs to the complex I 20 kDa subunit family. NDH-1 is composed of 14 different subunits. Subunits NuoB, C, D, E, F, and G constitute the peripheral sector of the complex. The cofactor is [4Fe-4S] cluster.

It localises to the cell membrane. It catalyses the reaction a quinone + NADH + 5 H(+)(in) = a quinol + NAD(+) + 4 H(+)(out). NDH-1 shuttles electrons from NADH, via FMN and iron-sulfur (Fe-S) centers, to quinones in the respiratory chain. The immediate electron acceptor for the enzyme in this species is believed to be ubiquinone. Couples the redox reaction to proton translocation (for every two electrons transferred, four hydrogen ions are translocated across the cytoplasmic membrane), and thus conserves the redox energy in a proton gradient. The protein is NADH-quinone oxidoreductase subunit B 2 of Roseiflexus sp. (strain RS-1).